Here is a 205-residue protein sequence, read N- to C-terminus: LexA repressor (205 aa).

A DNA-binding region (H-T-H motif) is located at residues 28-48; it reads RAELMRAFDFRSPNAAESHLR. Catalysis depends on for autocatalytic cleavage activity residues S120 and K159.

This sequence belongs to the peptidase S24 family. Homodimer.

The enzyme catalyses Hydrolysis of Ala-|-Gly bond in repressor LexA.. In terms of biological role, represses a number of genes involved in the response to DNA damage (SOS response), including recA and lexA. In the presence of single-stranded DNA, RecA interacts with LexA causing an autocatalytic cleavage which disrupts the DNA-binding part of LexA, leading to derepression of the SOS regulon and eventually DNA repair. The chain is LexA repressor from Acidithiobacillus ferrooxidans (strain ATCC 23270 / DSM 14882 / CIP 104768 / NCIMB 8455) (Ferrobacillus ferrooxidans (strain ATCC 23270)).